The following is a 161-amino-acid chain: Large ribosomal subunit protein eL21 (161 aa).

It belongs to the eukaryotic ribosomal protein eL21 family.

The protein is Large ribosomal subunit protein eL21 (RPL21) of Cyanophora paradoxa.